The primary structure comprises 240 residues: Thyroid transcription factor 1-associated protein 26 (240 aa).

The disordered stretch occupies residues 104–181 (LRKQQRKAGL…QEEYERVQAK (78 aa)). The segment covering 131-149 (TEQTSSEEPPGGHQPQPEE) has biased composition (low complexity). Basic and acidic residues predominate over residues 171 to 181 (AQEEYERVQAK).

This sequence belongs to the TAP26 family. Interacts with NKX2-1.

Its subcellular location is the nucleus. In terms of biological role, component of the transcription complexes of the pulmonary surfactant-associated protein-B (SFTPB) and -C (SFTPC). Enhances homeobox protein Nkx-2.1-activated SFTPB and SFTPC promoter activities. The protein is Thyroid transcription factor 1-associated protein 26 (Ccdc59) of Mus musculus (Mouse).